The primary structure comprises 422 residues: Inner membrane ALBINO3-like protein 2, chloroplastic (422 aa).

The span at 1–10 shows a compositional bias: polar residues; it reads MALQMKQSPS. Positions 1 to 22 are disordered; that stretch reads MALQMKQSPSMGVRRASQPVLP. Residues 65-85 form a helical membrane-spanning segment; sequence LYTLAEGGPIDVLAQFFEFVL. The Stromal segment spans residues 86–96; it reads QTLDEGLESAK. Residues 97–117 form a helical membrane-spanning segment; the sequence is IPYSYGFAIIALTVLVKVATF. The Lumenal segment spans residues 118-166; sequence PLTQKQVESTLSLQALQPRVKELQAKYADDPENLQLETARLYKEAGVNP. A helical transmembrane segment spans residues 167–187; that stretch reads LAGCFPTLATIPVFIGLYNAL. At 188-225 the chain is on the stromal side; sequence SNAAKEGLLTEGFFWIPSLGGPTTIGGGLEWLVPFENG. The helical transmembrane segment at 226–246 threads the bilayer; sequence APPVGWANAAAYLVMPVLLVA. The Lumenal segment spans residues 247–275; that stretch reads SQYASQKIISSQNNQDPSQQQAQAILKFL. The helical transmembrane segment at 276 to 296 threads the bilayer; that stretch reads PLMIGWFSLNVPSGLTLYWFV. The Stromal portion of the chain corresponds to 297–422; that stretch reads NNLLSTGQQL…GSEEGKDNSA (126 aa). A disordered region spans residues 325-422; sequence TAGSSTPIVK…GSEEGKDNSA (98 aa). Residues 334–350 show a composition bias toward basic and acidic residues; the sequence is KPKEERVKKVTGKELGS. Residues 358–367 are compositionally biased toward acidic residues; that stretch reads DGEEVEDVEV. The span at 368–380 shows a compositional bias: low complexity; the sequence is EVVSSGSSSSSGS. Positions 386–400 are enriched in basic and acidic residues; the sequence is RKGEKFRALKAREAA.

The protein belongs to the OXA1/ALB3/YidC (TC 2.A.9.2) family.

Its subcellular location is the plastid. It is found in the chloroplast thylakoid membrane. Its function is as follows. Required for the insertion of some light-harvesting complexes (LHC) proteins into the chloroplast thylakoid membrane. Essential for the assembly and activity of LHC I and II. Its function is probably partly distinct from that of ALB3.1. The sequence is that of Inner membrane ALBINO3-like protein 2, chloroplastic (ALB3.2) from Chlamydomonas reinhardtii (Chlamydomonas smithii).